Reading from the N-terminus, the 295-residue chain is Probable protein phosphatase 2C 6 (295 aa).

Positions 23–294 constitute a PPM-type phosphatase domain; the sequence is QYAATHMQGW…DNMTCILIQF (272 aa). Aspartate 57, glycine 58, aspartate 237, and aspartate 285 together coordinate Mn(2+).

The protein belongs to the PP2C family. The cofactor is Mg(2+). Mn(2+) is required as a cofactor.

Its subcellular location is the membrane. The enzyme catalyses O-phospho-L-seryl-[protein] + H2O = L-seryl-[protein] + phosphate. It carries out the reaction O-phospho-L-threonyl-[protein] + H2O = L-threonyl-[protein] + phosphate. Enzyme with a broad specificity. The chain is Probable protein phosphatase 2C 6 from Paramecium tetraurelia.